The primary structure comprises 447 residues: Probable alpha-galactosidase B (447 aa).

Positions 1 to 25 (MTTFFSLTTAAAVLTLARGSNALVR) are cleaved as a signal peptide. Intrachain disulfides connect cysteine 45/cysteine 77 and cysteine 127/cysteine 157. The active-site Nucleophile is aspartate 155. Residues asparagine 162 and asparagine 180 are each glycosylated (N-linked (GlcNAc...) asparagine). 225 to 229 (EWGQA) contributes to the substrate binding site. N-linked (GlcNAc...) asparagine glycosylation occurs at asparagine 236. Catalysis depends on aspartate 247, which acts as the Proton donor. Asparagine 286 carries an N-linked (GlcNAc...) asparagine glycan.

This sequence belongs to the glycosyl hydrolase 27 family.

Its subcellular location is the secreted. The enzyme catalyses Hydrolysis of terminal, non-reducing alpha-D-galactose residues in alpha-D-galactosides, including galactose oligosaccharides, galactomannans and galactolipids.. Its function is as follows. Hydrolyzes a variety of simple alpha-D-galactoside as well as more complex molecules such as oligosaccharides and polysaccharides. This chain is Probable alpha-galactosidase B (aglB), found in Aspergillus fumigatus (strain ATCC MYA-4609 / CBS 101355 / FGSC A1100 / Af293) (Neosartorya fumigata).